The primary structure comprises 151 residues: Transcriptional regulator MraZ (151 aa).

2 SpoVT-AbrB domains span residues 5 to 52 and 81 to 124; these read ATAV…PLMN and ATEC…SDVE.

The protein belongs to the MraZ family. In terms of assembly, forms oligomers.

The protein resides in the cytoplasm. It localises to the nucleoid. This is Transcriptional regulator MraZ from Haemophilus influenzae (strain PittGG).